A 208-amino-acid chain; its full sequence is Outer-membrane lipoprotein LolB (208 aa).

An N-terminal signal peptide occupies residues Met-1–Ala-21. Residue Cys-22 is the site of N-palmitoyl cysteine attachment. Cys-22 carries S-diacylglycerol cysteine lipidation.

This sequence belongs to the LolB family. In terms of assembly, monomer.

Its subcellular location is the cell outer membrane. In terms of biological role, plays a critical role in the incorporation of lipoproteins in the outer membrane after they are released by the LolA protein. The sequence is that of Outer-membrane lipoprotein LolB from Erwinia tasmaniensis (strain DSM 17950 / CFBP 7177 / CIP 109463 / NCPPB 4357 / Et1/99).